We begin with the raw amino-acid sequence, 441 residues long: ATP-dependent protease ATPase subunit HslU (441 aa).

ATP is bound by residues Ile-18, Gly-60–Glu-65, Asp-254, Glu-319, and Arg-391.

This sequence belongs to the ClpX chaperone family. HslU subfamily. A double ring-shaped homohexamer of HslV is capped on each side by a ring-shaped HslU homohexamer. The assembly of the HslU/HslV complex is dependent on binding of ATP.

Its subcellular location is the cytoplasm. In terms of biological role, ATPase subunit of a proteasome-like degradation complex; this subunit has chaperone activity. The binding of ATP and its subsequent hydrolysis by HslU are essential for unfolding of protein substrates subsequently hydrolyzed by HslV. HslU recognizes the N-terminal part of its protein substrates and unfolds these before they are guided to HslV for hydrolysis. This chain is ATP-dependent protease ATPase subunit HslU, found in Shewanella piezotolerans (strain WP3 / JCM 13877).